A 138-amino-acid polypeptide reads, in one-letter code: MTIQFGLHMMVGIISIEELSIFLRSLGKRECSVKKDHLGNFSDIEIIFPLELNTVHEMNSESEAEMGFNDSNCFRNMVLLVFAAVDVSAYFLRNGVFGLPKVILDKGWKQDIERTRRRRFMRCLIENHFHYDCVYRYC.

This is an uncharacterized protein from Saccharomyces cerevisiae (strain ATCC 204508 / S288c) (Baker's yeast).